The sequence spans 486 residues: B-type cell cycle switch protein ccs52B (486 aa).

Residues 24–36 carry the PEST motif motif; sequence RLETLSTPPSSAS. Positions 27–36 are enriched in polar residues; the sequence is TLSTPPSSAS. The interval 27 to 57 is disordered; the sequence is TLSTPPSSASPRAISNLSSTPSPSKSSKCSD. Positions 41–53 are enriched in low complexity; sequence SNLSSTPSPSKSS. Positions 57–63 match the C-box motif; sequence DRFIPCR. Positions 87 to 98 match the CSM motif motif; that stretch reads AYNRLLKSELFG. WD repeat units lie at residues 177–214, 218–257, 260–297, 301–340, 343–385, 387–428, and 431–470; these read QDDFYLNLVDWSSQNTLAVGLGTCVYLWSASNSKVTKL, GPYDGVCSVQWTKEGSFISIGTNGGQVQIWDGTKCKKVRT, GHQTRTGVLAWNSRILASGSRDRNILQHDMRVPSDFIG, GHKSEVCGLKWSCDDRELASGGNDNQLLVWNQHSQQPTLR, EHTA…QLNS, DTGS…KVAT, and GHSMRVLYLAMSPDGQTIVTGAGDETLRFWNVFPSMKTPA.

This sequence belongs to the WD repeat CDC20/Fizzy family. In terms of tissue distribution, mostly expressed in shoot apices and, to a lower extent, in roots, especially in root tips, and in hypocotyls. Expressed in nodulation-competent root zone but not in the nodules.

Its pathway is protein modification; protein ubiquitination. Its function is as follows. Component of the anaphase promoting complex/cyclosome (APC/C), a cell cycle-regulated E3 ubiquitin-protein ligase complex that controls progression through mitosis and the G1 phase of the cell cycle. The polypeptide is B-type cell cycle switch protein ccs52B (Medicago truncatula (Barrel medic)).